Here is a 438-residue protein sequence, read N- to C-terminus: Chromosomal replication initiator protein DnaA (438 aa).

The segment at 1-74 (MNEINKIWQK…SFYQITGSQV (74 aa)) is domain I, interacts with DnaA modulators. Residues 74-100 (VEVKYIITGKEHETGLIEEKKQVIKKG) form a domain II region. Positions 101 to 317 (NLNPKYTFDT…GSLIKLCAYT (217 aa)) are domain III, AAA+ region. ATP contacts are provided by Gly-145, Gly-147, Lys-148, and Thr-149. A domain IV, binds dsDNA region spans residues 318 to 438 (SLTKVPISMD…DSIIKKVTGQ (121 aa)).

This sequence belongs to the DnaA family. As to quaternary structure, oligomerizes as a right-handed, spiral filament on DNA at oriC.

It is found in the cytoplasm. Plays an essential role in the initiation and regulation of chromosomal replication. ATP-DnaA binds to the origin of replication (oriC) to initiate formation of the DNA replication initiation complex once per cell cycle. Binds the DnaA box (a 9 base pair repeat at the origin) and separates the double-stranded (ds)DNA. Forms a right-handed helical filament on oriC DNA; dsDNA binds to the exterior of the filament while single-stranded (ss)DNA is stabiized in the filament's interior. The ATP-DnaA-oriC complex binds and stabilizes one strand of the AT-rich DNA unwinding element (DUE), permitting loading of DNA polymerase. After initiation quickly degrades to an ADP-DnaA complex that is not apt for DNA replication. Binds acidic phospholipids. The protein is Chromosomal replication initiator protein DnaA of Thermodesulfovibrio yellowstonii (strain ATCC 51303 / DSM 11347 / YP87).